The primary structure comprises 648 residues: Dystrotelin (648 aa).

The ZZ-type zinc finger occupies 223 to 279 (QHRVHCHACKAFPITGLRYRCLKCLNVHLCQSCFLTERRSRKHKPSHSVLEYCTQPS). Zn(2+) is bound by residues Cys-228, Cys-231, Cys-243, Cys-246, Cys-252, Cys-255, His-265, and His-269. Positions 367–446 (QRETAELQKD…LDTVRHLLSL (80 aa)) form a coiled coil. Over residues 455–474 (SHSNLQLEQDGSINENNWTQ) the composition is skewed to polar residues. 2 disordered regions span residues 455-509 (SHSN…DTLY) and 536-557 (QREEEELQEEEEGLHEKEEGLP). The span at 479 to 502 (KPHESSSTEHEVEERGTRQERRFE) shows a compositional bias: basic and acidic residues. Positions 538 to 548 (EEEELQEEEEG) are enriched in acidic residues.

It localises to the cell membrane. This Danio rerio (Zebrafish) protein is Dystrotelin (dytn).